A 138-amino-acid polypeptide reads, in one-letter code: Large ribosomal subunit protein bL17 (138 aa).

The protein belongs to the bacterial ribosomal protein bL17 family. Part of the 50S ribosomal subunit. Contacts protein L32.

This is Large ribosomal subunit protein bL17 from Dinoroseobacter shibae (strain DSM 16493 / NCIMB 14021 / DFL 12).